We begin with the raw amino-acid sequence, 255 residues long: Methylthioribulose-1-phosphate dehydratase (255 aa).

Residue Cys-98 coordinates substrate. 2 residues coordinate Zn(2+): His-116 and His-118. Glu-150 serves as the catalytic Proton donor/acceptor. His-207 lines the Zn(2+) pocket.

The protein belongs to the aldolase class II family. MtnB subfamily. It depends on Zn(2+) as a cofactor.

It localises to the cytoplasm. The catalysed reaction is 5-(methylsulfanyl)-D-ribulose 1-phosphate = 5-methylsulfanyl-2,3-dioxopentyl phosphate + H2O. It functions in the pathway amino-acid biosynthesis; L-methionine biosynthesis via salvage pathway; L-methionine from S-methyl-5-thio-alpha-D-ribose 1-phosphate: step 2/6. Functionally, catalyzes the dehydration of methylthioribulose-1-phosphate (MTRu-1-P) into 2,3-diketo-5-methylthiopentyl-1-phosphate (DK-MTP-1-P). This Pyricularia oryzae (strain 70-15 / ATCC MYA-4617 / FGSC 8958) (Rice blast fungus) protein is Methylthioribulose-1-phosphate dehydratase.